The following is a 484-amino-acid chain: tRNA sulfurtransferase (484 aa).

One can recognise a THUMP domain in the interval 63–167 (QAFGERLACI…GDKLYMVTKR (105 aa)). ATP is bound by residues 185–186 (LI), Lys267, Gly289, and Gln298. Cys346 and Cys458 are oxidised to a cystine. The 79-residue stretch at 406 to 484 (IDTNEVVIDI…GYHNVKVYRP (79 aa)) folds into the Rhodanese domain. Cys458 acts as the Cysteine persulfide intermediate in catalysis.

Belongs to the ThiI family.

It localises to the cytoplasm. It catalyses the reaction [ThiI sulfur-carrier protein]-S-sulfanyl-L-cysteine + a uridine in tRNA + 2 reduced [2Fe-2S]-[ferredoxin] + ATP + H(+) = [ThiI sulfur-carrier protein]-L-cysteine + a 4-thiouridine in tRNA + 2 oxidized [2Fe-2S]-[ferredoxin] + AMP + diphosphate. The catalysed reaction is [ThiS sulfur-carrier protein]-C-terminal Gly-Gly-AMP + S-sulfanyl-L-cysteinyl-[cysteine desulfurase] + AH2 = [ThiS sulfur-carrier protein]-C-terminal-Gly-aminoethanethioate + L-cysteinyl-[cysteine desulfurase] + A + AMP + 2 H(+). Its pathway is cofactor biosynthesis; thiamine diphosphate biosynthesis. Its function is as follows. Catalyzes the ATP-dependent transfer of a sulfur to tRNA to produce 4-thiouridine in position 8 of tRNAs, which functions as a near-UV photosensor. Also catalyzes the transfer of sulfur to the sulfur carrier protein ThiS, forming ThiS-thiocarboxylate. This is a step in the synthesis of thiazole, in the thiamine biosynthesis pathway. The sulfur is donated as persulfide by IscS. The chain is tRNA sulfurtransferase from Shewanella sp. (strain ANA-3).